A 125-amino-acid chain; its full sequence is Small ribosomal subunit protein uS12 (125 aa).

At Asp89 the chain carries 3-methylthioaspartic acid.

Belongs to the universal ribosomal protein uS12 family. As to quaternary structure, part of the 30S ribosomal subunit. Contacts proteins S8 and S17. May interact with IF1 in the 30S initiation complex.

Functionally, with S4 and S5 plays an important role in translational accuracy. Interacts with and stabilizes bases of the 16S rRNA that are involved in tRNA selection in the A site and with the mRNA backbone. Located at the interface of the 30S and 50S subunits, it traverses the body of the 30S subunit contacting proteins on the other side and probably holding the rRNA structure together. The combined cluster of proteins S8, S12 and S17 appears to hold together the shoulder and platform of the 30S subunit. In Ralstonia nicotianae (strain ATCC BAA-1114 / GMI1000) (Ralstonia solanacearum), this protein is Small ribosomal subunit protein uS12.